The following is a 227-amino-acid chain: Enolase-phosphatase E1 (227 aa).

Residues Asp11 and Glu13 each coordinate Mg(2+). Substrate-binding positions include 118–119 and Lys161; that span reads SS. Residue Asp186 coordinates Mg(2+).

This sequence belongs to the HAD-like hydrolase superfamily. MasA/MtnC family. As to quaternary structure, monomer. Requires Mg(2+) as cofactor.

The protein resides in the cytoplasm. The protein localises to the nucleus. The enzyme catalyses 5-methylsulfanyl-2,3-dioxopentyl phosphate + H2O = 1,2-dihydroxy-5-(methylsulfanyl)pent-1-en-3-one + phosphate. The protein operates within amino-acid biosynthesis; L-methionine biosynthesis via salvage pathway; L-methionine from S-methyl-5-thio-alpha-D-ribose 1-phosphate: step 3/6. Its pathway is amino-acid biosynthesis; L-methionine biosynthesis via salvage pathway; L-methionine from S-methyl-5-thio-alpha-D-ribose 1-phosphate: step 4/6. Bifunctional enzyme that catalyzes the enolization of 2,3-diketo-5-methylthiopentyl-1-phosphate (DK-MTP-1-P) into the intermediate 2-hydroxy-3-keto-5-methylthiopentenyl-1-phosphate (HK-MTPenyl-1-P), which is then dephosphorylated to form the acireductone 1,2-dihydroxy-3-keto-5-methylthiopentene (DHK-MTPene). This Saccharomyces cerevisiae (strain RM11-1a) (Baker's yeast) protein is Enolase-phosphatase E1.